Reading from the N-terminus, the 1193-residue chain is DNA-directed RNA polymerase subunit beta (1193 aa).

Acidic residues predominate over residues Glu1149–Asp1162. Residues Glu1149–Glu1193 are disordered. Positions Asp1184–Glu1193 are enriched in basic and acidic residues.

It belongs to the RNA polymerase beta chain family. In terms of assembly, RNAP is composed of a core of 2 alpha, a beta and a beta' subunit. The core is associated with a delta subunit, and at least one of epsilon or omega. When a sigma factor is associated with the core the holoenzyme is formed, which can initiate transcription.

It catalyses the reaction RNA(n) + a ribonucleoside 5'-triphosphate = RNA(n+1) + diphosphate. DNA-dependent RNA polymerase catalyzes the transcription of DNA into RNA using the four ribonucleoside triphosphates as substrates. This Bacillus subtilis (strain 168) protein is DNA-directed RNA polymerase subunit beta.